The chain runs to 403 residues: D-mannonate dehydratase CC0532 (403 aa).

Substrate-binding residues include Asn-38 and His-123. The Proton donor/acceptor role is filled by Tyr-160. Mg(2+) is bound at residue Asp-211. Residue His-213 is the Proton donor/acceptor of the active site. Mg(2+)-binding residues include Glu-237 and Glu-263. Residues Glu-263, Arg-284, His-313, Asp-317, and Glu-340 each contribute to the substrate site.

Belongs to the mandelate racemase/muconate lactonizing enzyme family. GalD subfamily. Mg(2+) is required as a cofactor.

It carries out the reaction D-mannonate = 2-dehydro-3-deoxy-D-gluconate + H2O. It participates in carbohydrate metabolism; pentose and glucuronate interconversion. In terms of biological role, catalyzes the dehydration of D-mannonate. Has no detectable activity with a panel of 70 other acid sugars (in vitro). This is D-mannonate dehydratase CC0532 from Caulobacter vibrioides (strain ATCC 19089 / CIP 103742 / CB 15) (Caulobacter crescentus).